Consider the following 321-residue polypeptide: Lipoyl synthase (321 aa).

[4Fe-4S] cluster-binding residues include C68, C73, C79, C94, C98, C101, and S308. Residues 80-297 (FNHGTATFMI…KVLADELGFT (218 aa)) enclose the Radical SAM core domain.

This sequence belongs to the radical SAM superfamily. Lipoyl synthase family. Requires [4Fe-4S] cluster as cofactor.

It is found in the cytoplasm. The enzyme catalyses [[Fe-S] cluster scaffold protein carrying a second [4Fe-4S](2+) cluster] + N(6)-octanoyl-L-lysyl-[protein] + 2 oxidized [2Fe-2S]-[ferredoxin] + 2 S-adenosyl-L-methionine + 4 H(+) = [[Fe-S] cluster scaffold protein] + N(6)-[(R)-dihydrolipoyl]-L-lysyl-[protein] + 4 Fe(3+) + 2 hydrogen sulfide + 2 5'-deoxyadenosine + 2 L-methionine + 2 reduced [2Fe-2S]-[ferredoxin]. It functions in the pathway protein modification; protein lipoylation via endogenous pathway; protein N(6)-(lipoyl)lysine from octanoyl-[acyl-carrier-protein]: step 2/2. In terms of biological role, catalyzes the radical-mediated insertion of two sulfur atoms into the C-6 and C-8 positions of the octanoyl moiety bound to the lipoyl domains of lipoate-dependent enzymes, thereby converting the octanoylated domains into lipoylated derivatives. In Shewanella sp. (strain MR-7), this protein is Lipoyl synthase.